A 191-amino-acid polypeptide reads, in one-letter code: Orotate phosphoribosyltransferase (191 aa).

114-122 (EDVVTTGKS) provides a ligand contact to 5-phospho-alpha-D-ribose 1-diphosphate. Thr-118 and Arg-146 together coordinate orotate.

It belongs to the purine/pyrimidine phosphoribosyltransferase family. PyrE subfamily. In terms of assembly, homodimer. Mg(2+) serves as cofactor.

The catalysed reaction is orotidine 5'-phosphate + diphosphate = orotate + 5-phospho-alpha-D-ribose 1-diphosphate. It participates in pyrimidine metabolism; UMP biosynthesis via de novo pathway; UMP from orotate: step 1/2. In terms of biological role, catalyzes the transfer of a ribosyl phosphate group from 5-phosphoribose 1-diphosphate to orotate, leading to the formation of orotidine monophosphate (OMP). This chain is Orotate phosphoribosyltransferase, found in Clostridium botulinum (strain Langeland / NCTC 10281 / Type F).